We begin with the raw amino-acid sequence, 90 residues long: Large ribosomal subunit protein eL31 (90 aa).

Belongs to the eukaryotic ribosomal protein eL31 family.

This Thermococcus gammatolerans (strain DSM 15229 / JCM 11827 / EJ3) protein is Large ribosomal subunit protein eL31.